Reading from the N-terminus, the 538-residue chain is Protein PNS1 (538 aa).

Low complexity predominate over residues 1 to 54 (MGESDAYYNGGQQQQYNGGYQQQYQPQPPAASYQAPPQQPYQQQPYQQGPPQNG). Residues 1–67 (MGESDAYYNG…GNGYMPAQGY (67 aa)) form a disordered region. The Cytoplasmic segment spans residues 1–88 (MGESDAYYNG…FKIAKPKYND (88 aa)). A helical membrane pass occupies residues 89–109 (LWAGILLILVFAGFVVVSGLA). The Extracellular segment spans residues 110–137 (LQGYSANKGNAGDGIYNNKNDFSPNTST). A glycan (N-linked (GlcNAc...) asparagine) is linked at N134. The helical transmembrane segment at 138 to 158 (VILFMFVLAVAFVLSYAYVWM) threads the bilayer. Topologically, residues 159–165 (ARLFPKQ) are cytoplasmic. A helical membrane pass occupies residues 166–186 (FIWVTGILNVCWAIGTAIFYL). At 187–191 (WRKYW) the chain is on the extracellular side. A helical transmembrane segment spans residues 192–212 (SAGIVFLIFGLFMAFCFWTWI). Residues 213–239 (SRIPFSALMLKTTIDVSKKYGHVYLVS) are Cytoplasmic-facing. Residues 240 to 260 (LIGGIIATAFSAWYAITLVGI) traverse the membrane as a helical segment. At 261–280 (YVKYQPAQDNPSCADGGCGK) the chain is on the extracellular side. Residues 281 to 301 (GKVIGLIAFITFAMYWFSEWL) traverse the membrane as a helical segment. At 302–335 (KNTIHTTIAGVYGSWYFNPHNFPKDATRASAKRA) the chain is on the cytoplasmic side. A helical membrane pass occupies residues 336-356 (LTYSFGSIALGSLLVAIIQFL). At 357–372 (RQICNAARNQEGADGS) the chain is on the extracellular side. Residues 373-393 (FVGYAIFCCISCLLGLLEWAV) traverse the membrane as a helical segment. The Cytoplasmic segment spans residues 394–434 (EFINRYAFCHIALYGKAYFAAAKDTWKMIKDRGIDALINDC). The helical transmembrane segment at 435 to 455 (LIGPVLSFGALFIAYACALLA) threads the bilayer. The Extracellular segment spans residues 456–474 (YLYLYFTDPAYNSDGQYTA). A helical membrane pass occupies residues 475-495 (VVMAFSFLIGFQIANVFTTPI). Residues 496–538 (SSGIETIFVAAGWDPQVMWRDHPELYNEMVRVYPKVQQVIKDR) are Cytoplasmic-facing.

It belongs to the CTL (choline transporter-like) family.

It is found in the cell membrane. Functionally, probably involved in transport through the plasma membrane. This Gibberella zeae (strain ATCC MYA-4620 / CBS 123657 / FGSC 9075 / NRRL 31084 / PH-1) (Wheat head blight fungus) protein is Protein PNS1 (PNS1).